A 448-amino-acid chain; its full sequence is Alginate biosynthesis transcriptional regulatory protein AlgB (448 aa).

The Response regulatory domain maps to 10–124 (RILLVDDESA…QLRLATAKQL (115 aa)). 4-aspartylphosphate is present on Asp59. The Sigma-54 factor interaction domain occupies 147–376 (LDSHSPAMMA…LRNVVERASI (230 aa)). Residues 175–182 (GESGTGKG) and 238–247 (ADGGTLFLDE) each bind ATP. A DNA-binding region (H-T-H motif) is located at residues 425–444 (LDQAAKTLGIDASTLYRKRK).

Its pathway is glycan biosynthesis; alginate biosynthesis [regulation]. In terms of biological role, positive regulator of the alginate biosynthetic gene algD. In Pseudomonas putida (strain ATCC 47054 / DSM 6125 / CFBP 8728 / NCIMB 11950 / KT2440), this protein is Alginate biosynthesis transcriptional regulatory protein AlgB (algB).